The chain runs to 304 residues: tRNA dimethylallyltransferase (304 aa).

Residue Ala-9–Ser-16 participates in ATP binding. Thr-11 to Ser-16 contributes to the substrate binding site.

Belongs to the IPP transferase family. As to quaternary structure, monomer. The cofactor is Mg(2+).

The enzyme catalyses adenosine(37) in tRNA + dimethylallyl diphosphate = N(6)-dimethylallyladenosine(37) in tRNA + diphosphate. Functionally, catalyzes the transfer of a dimethylallyl group onto the adenine at position 37 in tRNAs that read codons beginning with uridine, leading to the formation of N6-(dimethylallyl)adenosine (i(6)A). This chain is tRNA dimethylallyltransferase, found in Deinococcus geothermalis (strain DSM 11300 / CIP 105573 / AG-3a).